The sequence spans 585 residues: Arginine--tRNA ligase (585 aa).

Positions Ala-131–His-141 match the 'HIGH' region motif.

It belongs to the class-I aminoacyl-tRNA synthetase family. Monomer.

The protein localises to the cytoplasm. It catalyses the reaction tRNA(Arg) + L-arginine + ATP = L-arginyl-tRNA(Arg) + AMP + diphosphate. This Rhizobium etli (strain CIAT 652) protein is Arginine--tRNA ligase.